A 466-amino-acid chain; its full sequence is Signal recognition particle 54 kDa protein (466 aa).

GTP is bound by residues 104 to 111 (GLQGSGKT), 184 to 188 (DTAGR), and 242 to 245 (TKLD). The tract at residues 444–466 (MQQGGGGGGGGGGGLGGMGPFGD) is disordered. Over residues 446–466 (QGGGGGGGGGGGLGGMGPFGD) the composition is skewed to gly residues.

It belongs to the GTP-binding SRP family. SRP54 subfamily. As to quaternary structure, part of the signal recognition particle protein translocation system, which is composed of SRP and FtsY. Archaeal SRP consists of a 7S RNA molecule of 300 nucleotides and two protein subunits: SRP54 and SRP19.

It localises to the cytoplasm. The enzyme catalyses GTP + H2O = GDP + phosphate + H(+). Functionally, involved in targeting and insertion of nascent membrane proteins into the cytoplasmic membrane. Binds to the hydrophobic signal sequence of the ribosome-nascent chain (RNC) as it emerges from the ribosomes. The SRP-RNC complex is then targeted to the cytoplasmic membrane where it interacts with the SRP receptor FtsY. This is Signal recognition particle 54 kDa protein from Natronomonas pharaonis (strain ATCC 35678 / DSM 2160 / CIP 103997 / JCM 8858 / NBRC 14720 / NCIMB 2260 / Gabara) (Halobacterium pharaonis).